The following is a 715-amino-acid chain: MSDDESMVLNFSTDTAGIQRADKVTGGRWKDRRKLQQRLGGREPVKRRAEGGDKERGDKRAKVDTGNAQEKKNIPKPVSKADVNINSQIVSSLFTSNRAKQTSENKNKHNSDDKVVPSNAPLTDDSFEGLGVGSLVVSHLENKMRIQKSTSIQKVVIPQILQNADKTDFFIHAQTGSGKTLAYLLPIFSAILGMGDHIDRKSGCFALIIAPTRELASQIYHVTTMLANCCHYLVPCLLIGGERKKSEKARLRKGCNFIIGTPGRILDHFQNTKVIKEQMQSSLRYVVLDEGDKLMELGFEETINQIMEIVNSMDVITRKYPKLPNRIVHLLCSATKNNEVAKLSKRSLDNYKVISIGGKKDTMMDNTSVPDQLLQKVVIAPPKLRLITLAGVLDGIQKKPLDAGSVAKRTIVFLSCADSVDYHFEVFSGNDGLYKNLVGDSVRVLSKGNKILPSIKDEELPGIICYKLHGSLSQQMRTMTLKHFATDSEQTKGKHLILFCTDVASRGLDLPDVSTVIEFDPPFAVEDHLHRIGRTARAGRSGEALLFLLPGEEEGYLDYIQKYHPKGWDLLDAEKDVLIKAFNDIDVARNDKEIKSTGKTFEWDTNATTWHLNVERRILENEQFKEQATKGYISHVRAYATHISAEKQYFNLKGVHLGHLAKSFGLRDRPKAMGMNSSKDANGNERSKPKKENAKNKMFRMARMAAKQSADEFNY.

Disordered stretches follow at residues 1 to 82 (MSDD…SKAD) and 94 to 121 (FTSNRAKQTSENKNKHNSDDKVVPSNAP). Basic and acidic residues-rich tracts occupy residues 20-29 (RADKVTGGRW), 40-73 (GGREPVKRRAEGGDKERGDKRAKVDTGNAQEKKN), and 101-115 (QTSENKNKHNSDDKV). The short motif at 125–154 (DSFEGLGVGSLVVSHLENKMRIQKSTSIQK) is the Q motif element. One can recognise a Helicase ATP-binding domain in the interval 160 to 354 (ILQNADKTDF…KRSLDNYKVI (195 aa)). 173 to 180 (AQTGSGKT) is an ATP binding site. Positions 289 to 292 (DEGD) match the DEAD box motif. Residues 400 to 586 (PLDAGSVAKR…VLIKAFNDID (187 aa)) form the Helicase C-terminal domain. Positions 668–698 (DRPKAMGMNSSKDANGNERSKPKKENAKNKM) are disordered. The span at 682–695 (NGNERSKPKKENAK) shows a compositional bias: basic and acidic residues.

The protein belongs to the DEAD box helicase family. DDX31/DBP7 subfamily.

The protein resides in the nucleus. It is found in the nucleolus. It catalyses the reaction ATP + H2O = ADP + phosphate + H(+). Its function is as follows. ATP-binding RNA helicase involved in the biogenesis of 60S ribosomal subunits and is required for the normal formation of 25S and 5.8S rRNAs. This chain is ATP-dependent RNA helicase DBP7 (DBP7), found in Candida glabrata (strain ATCC 2001 / BCRC 20586 / JCM 3761 / NBRC 0622 / NRRL Y-65 / CBS 138) (Yeast).